A 255-amino-acid polypeptide reads, in one-letter code: F-box/SPRY domain-containing protein 1 (255 aa).

The region spanning 3-51 (DPVAALCNYNVLEVIFSYLELDDLSHCSQVCKSWYHFLNDENSDVWRWH) is the F-box domain. The 193-residue stretch at 61–253 (LKSDLLASVS…VSMVYLGTPL (193 aa)) folds into the B30.2/SPRY domain.

The protein belongs to the FBXO45/Fsn family. Component of an E3 ubiquitin ligase complex composed of hiw and Fsn. Interacts with Rae1, probably as part of the hiw-Fsn complex. Interacts (via B30.2/SPRY domain) with vas. Interacts with Cul1. In terms of tissue distribution, expressed in nurse cells and oocytes (at protein level). Expressed in the brain. Expressed in the neuromuscular junction (NMJ).

The protein localises to the cytoplasm. Its subcellular location is the nucleus. It is found in the synapse. It localises to the cell projection. The protein resides in the axon. The protein localises to the perikaryon. It participates in protein modification; protein ubiquitination. Functionally, required in the presynaptic motoneuron to down-regulate the levels of wnd and restrain synaptic terminal growth at the neuromuscular junction (NMJ). Negatively regulates the localization of vas to the posterior pole of the oocyte. Involved in primordial germ cell formation. The protein is F-box/SPRY domain-containing protein 1 (Fsn) of Drosophila melanogaster (Fruit fly).